Consider the following 324-residue polypeptide: MIFSKISQVAHYVPQQLVTNNDLASIMDTSHEWIFSRTGIAERHISRDEMTSDLAIQVADQLLTQSGLKADAIDFIIVATISPDATMPSTAAKVQAAIAATSAFAFDMTAACSGFVFALAMADKLIASGAYQNGMVIGAETLSKLVNWQDRATAVLFGDGAGGVLLEASKDKHVLAEPLHTDGARCQSLISGETSLSSPYSIGKKAIATIQMDGRAIFDFAIRDVSKSILTLMAQSDITKDDIDYCLLHQANRRILDKIARKIDVPREKFLENMMRYGNTSAASIPILLSEAVQKGQIRLDGTQKILLSGFGGGLTWGSLIVKI.

Catalysis depends on residues C112 and H249. Residues 250-254 form an ACP-binding region; it reads QANRR. N279 is an active-site residue.

The protein belongs to the thiolase-like superfamily. FabH family. Homodimer.

The protein resides in the cytoplasm. The enzyme catalyses malonyl-[ACP] + acetyl-CoA + H(+) = 3-oxobutanoyl-[ACP] + CO2 + CoA. Its pathway is lipid metabolism; fatty acid biosynthesis. In terms of biological role, catalyzes the condensation reaction of fatty acid synthesis by the addition to an acyl acceptor of two carbons from malonyl-ACP. Catalyzes the first condensation reaction which initiates fatty acid synthesis and may therefore play a role in governing the total rate of fatty acid production. Possesses both acetoacetyl-ACP synthase and acetyl transacylase activities. Its substrate specificity determines the biosynthesis of branched-chain and/or straight-chain of fatty acids. The protein is Beta-ketoacyl-[acyl-carrier-protein] synthase III of Streptococcus pyogenes serotype M49 (strain NZ131).